The sequence spans 161 residues: Cyclic pyranopterin monophosphate synthase (161 aa).

Substrate-binding positions include 75–77 and 113–114; these read LCH and ME. Aspartate 128 is an active-site residue.

It belongs to the MoaC family. Homohexamer; trimer of dimers.

It carries out the reaction (8S)-3',8-cyclo-7,8-dihydroguanosine 5'-triphosphate = cyclic pyranopterin phosphate + diphosphate. The protein operates within cofactor biosynthesis; molybdopterin biosynthesis. Its function is as follows. Catalyzes the conversion of (8S)-3',8-cyclo-7,8-dihydroguanosine 5'-triphosphate to cyclic pyranopterin monophosphate (cPMP). This chain is Cyclic pyranopterin monophosphate synthase, found in Cronobacter sakazakii (strain ATCC BAA-894) (Enterobacter sakazakii).